The chain runs to 473 residues: tRNA modification GTPase MnmE (473 aa).

Arg28, Glu93, and Arg132 together coordinate (6S)-5-formyl-5,6,7,8-tetrahydrofolate. The TrmE-type G domain maps to 228–394; it reads GVATVLVGSP…LKQQMSNMVA (167 aa). Residues 238–243, 257–263, and 282–285 each bind GTP; these read NAGKST, SHQPGTT, and DTAG. Ser242 and Thr263 together coordinate Mg(2+). Lys473 provides a ligand contact to (6S)-5-formyl-5,6,7,8-tetrahydrofolate.

It belongs to the TRAFAC class TrmE-Era-EngA-EngB-Septin-like GTPase superfamily. TrmE GTPase family. Homodimer. Heterotetramer of two MnmE and two MnmG subunits. The cofactor is K(+).

It localises to the cytoplasm. In terms of biological role, exhibits a very high intrinsic GTPase hydrolysis rate. Involved in the addition of a carboxymethylaminomethyl (cmnm) group at the wobble position (U34) of certain tRNAs, forming tRNA-cmnm(5)s(2)U34. In Chlorobium chlorochromatii (strain CaD3), this protein is tRNA modification GTPase MnmE.